Here is a 1342-residue protein sequence, read N- to C-terminus: WD repeat-containing protein 19 (1342 aa).

WD repeat units follow at residues 11 to 51, 52 to 92, 95 to 134, 137 to 175, 273 to 311, and 317 to 356; these read TWLG…RSEI, NLPG…TSQL, GMRDQMSFLLWSKVGSFLAVGTVKGNLLIYNHQTSRKIPV, KHTKRITCGCWNAENLLALGGEDKMITVSNQEGDTIRQT, NHKDNLTSIAVSQTLNKVATCGDNCIKIQDLVDLKDMYV, and EENKGLGTLSWTDDGQLLALSTQRGSLHVFLTKLPILGDA. TPR repeat units follow at residues 736–769, 775–808, 840–873, 895–928, 951–984, and 1020–1053; these read AQDLYLASSCPIAALEMRRDLQHWDSALQLAKHL, PFISKEYAIQLEFAGDYVNALAHYEKGITGDNKE, RVLKRDCGAILENMKQFSEAAQLYEKGLYYDKAA, PKIHLQYAKAKEADGRYKEAVVAYENAKQWQSVI, LDGAKMVARFFLQLGDYGSAIQFLVMSKCNNEAF, and EKRYLQAGKFFLLCGQYSRALKHFLKCPSSEDNV.

In terms of assembly, component of the IFT complex A (IFT-A) complex. IFT-A complex is divided into a core subcomplex composed of IFT122:IFT140:WDR19 which is associated with TULP3 and a peripheral subcomplex composed of IFT43:WDR35:TTC21B. Interacts (via C-terminal region) with IFT122 (via C-terminal region). Interacts with BBS1. Interacts with TTC25. As to expression, some isoforms are tissue-specific. Highly expressed in the prostate. Lower expression in the cerebellum, pituitary gland, fetal lung, and pancreas. In normal prostate, expressed in both basal and luminal epithelial cells. No expression detected in fibromuscular stromal cells, endothelial cells, or infiltrating lymphocytes. Uniformed expression in prostate adenocarcinoma cells.

It is found in the cell projection. The protein localises to the cilium. Its subcellular location is the cytoplasm. It localises to the cytoskeleton. The protein resides in the cilium basal body. It is found in the photoreceptor outer segment. The protein localises to the flagellum. As component of the IFT complex A (IFT-A), a complex required for retrograde ciliary transport and entry into cilia of G protein-coupled receptors (GPCRs), it is involved in cilia function and/or assembly. Essential for functional IFT-A assembly and ciliary entry of GPCRs. Associates with the BBSome complex to mediate ciliary transport. The chain is WD repeat-containing protein 19 from Homo sapiens (Human).